The primary structure comprises 181 residues: Cytochrome c-type biogenesis protein CcmE (181 aa).

The Cytoplasmic segment spans residues M1–R8. The chain crosses the membrane as a helical; Signal-anchor for type II membrane protein span at residues L9–A29. Residues L30–N181 are Periplasmic-facing. Heme contacts are provided by H131 and Y135. Composition is skewed to basic and acidic residues over residues Y135–H148 and A156–K166. A disordered region spans residues Y135–K166.

It belongs to the CcmE/CycJ family.

The protein localises to the cell inner membrane. Its function is as follows. Heme chaperone required for the biogenesis of c-type cytochromes. Transiently binds heme delivered by CcmC and transfers the heme to apo-cytochromes in a process facilitated by CcmF and CcmH. The protein is Cytochrome c-type biogenesis protein CcmE of Actinobacillus pleuropneumoniae serotype 7 (strain AP76).